We begin with the raw amino-acid sequence, 227 residues long: uncharacterized protein (227 aa).

Helical transmembrane passes span Ala27 to Leu47, Pro63 to Gly83, Thr126 to Val146, Val153 to Gly173, and Phe186 to Ala206.

The protein belongs to the DedA family.

It localises to the cell membrane. This is an uncharacterized protein from Mycobacterium tuberculosis (strain CDC 1551 / Oshkosh).